A 370-amino-acid chain; its full sequence is MALMKKSLSAALLSSPLLIICLIALLADPFSVGARRLLEDPKPEIPKLPELPKFEVPKLPEFPKPELPKLPEFPKPELPKIPEIPKPELPKVPEIPKPEETKLPDIPKLELPKFPEIPKPELPKMPEIPKPELPKVPEIQKPELPKMPEIPKPELPKFPEIPKPDLPKFPENSKPEVPKLMETEKPEAPKVPEIPKPELPKLPEVPKLEAPKVPEIQKPELPKMPELPKMPEIQKPELPKLPEVPKLEAPKVPEIQKPELPKMPELPKMPEIQKPELPKMPEIQKPELPKVPEVPKPELPTVPEVPKSEAPKFPEIPKPELPKIPEVPKPELPKVPEITKPAVPEIPKPELPTMPQLPKLPEFPKVPGTP.

The N-terminal stretch at 1-34 (MALMKKSLSAALLSSPLLIICLIALLADPFSVGA) is a signal peptide. 52 consecutive repeat copies span residues 43 to 47 (PEIPK), 49 to 53 (PELPK), 54 to 58 (FEVPK), 60 to 64 (PEFPK), 65 to 69 (PELPK), 71 to 75 (PEFPK), 76 to 80 (PELPK), 82 to 86 (PEIPK), 87 to 91 (PELPK), 93 to 97 (PEIPK), 98 to 102 (PEETK), 104 to 108 (PDIPK), 109 to 113 (LELPK), 115 to 119 (PEIPK), 120 to 124 (PELPK), 126 to 130 (PEIPK), 131 to 135 (PELPK), 137 to 141 (PEIQK), 142 to 146 (PELPK), 148 to 152 (PEIPK), 153 to 157 (PELPK), 159 to 163 (PEIPK), 164 to 168 (PDLPK), 175 to 179 (PEVPK), 186 to 190 (PEAPK), 192 to 196 (PEIPK), 197 to 201 (PELPK), 203 to 207 (PEVPK), 214 to 218 (PEIQK), 219 to 223 (PELPK), 225 to 229 (PELPK), 231 to 235 (PEIQK), 236 to 240 (PELPK), 242 to 246 (PEVPK), 247 to 251 (LEAPK), 253 to 257 (PEIQK), 258 to 262 (PELPK), 264 to 268 (PELPK), 270 to 274 (PEIQK), 275 to 279 (PELPK), 281 to 285 (PEIQK), 286 to 290 (PELPK), 292 to 296 (PEVPK), 303 to 307 (PEVPK), 314 to 318 (PEIPK), 319 to 323 (PELPK), 325 to 329 (PEVPK), 330 to 334 (PELPK), 336 to 340 (PEITK), 344 to 348 (PEIPK), 355 to 359 (PQLPK), and 361 to 365 (PEFPK). Residues 43 to 365 (PEIPKLPELP…QLPKLPEFPK (323 aa)) form a 52 X 5 AA tandem repeat of P-[DEGQ]-[AEFLIV]-[QPT]-K region. Positions 65-223 (PELPKLPEFP…PEIQKPELPK (159 aa)) are enriched in basic and acidic residues. The tract at residues 65 to 370 (PELPKLPEFP…PEFPKVPGTP (306 aa)) is disordered. Residues 232 to 262 (EIQKPELPKLPEVPKLEAPKVPEIQKPELPK) show a composition bias toward basic and acidic residues. 2 stretches are compositionally biased toward basic and acidic residues: residues 271-296 (EIQKPELPKMPEIQKPELPKVPEVPK) and 306-334 (PKSEAPKFPEIPKPELPKIPEVPKPELPK).

The protein resides in the secreted. It is found in the cell wall. Functionally, positive regulator of germination and plant growth. The sequence is that of Protein PELPK1 from Arabidopsis thaliana (Mouse-ear cress).